The primary structure comprises 295 residues: MQSDSAPLPRVEYVFETSKFRMTSRANEARLRLTNECPILVRPHEPFIMPTGIHFTRTPSCAFILTGETDKDVFCHTGLIDGGYRGEIQVILLNKRKYPVTLYRGELNICLSAFNYVLPPLRDVSFLTPPMYANDAGFDVMVMHSMVIPPTTDQPFMIYLGVETPGPPEPHVALALGRSGLASRGIVIDVSEWGPRGLQLKFYNYSGQPWLAQPGSRICQIVFVERRHILKGFKKCLRHRKLAPGVRFREARVHFREDTNSVRKHTHEDNPVHEPNVATASADIRGTKGLGSSGF.

178-180 (RSG) is a substrate binding site. Residues 260-272 (NSVRKHTHEDNPV) are compositionally biased toward basic and acidic residues. Residues 260–295 (NSVRKHTHEDNPVHEPNVATASADIRGTKGLGSSGF) are disordered.

The protein belongs to the dUTPase family. It depends on Mg(2+) as a cofactor.

The enzyme catalyses dUTP + H2O = dUMP + diphosphate + H(+). Its function is as follows. Involved in nucleotide metabolism: produces dUMP, the immediate precursor of thymidine nucleotides and decreases the intracellular concentration of dUTP to avoid uracil incorporation into viral DNA. The protein is Deoxyuridine 5'-triphosphate nucleotidohydrolase of Human herpesvirus 8 type P (isolate GK18) (HHV-8).